The following is a 411-amino-acid chain: LIM domain-binding protein 1 (411 aa).

Disordered stretches follow at residues 284 to 330 (PPAE…TFAL) and 367 to 411 (DAAN…QASQ). A compositionally biased stretch (low complexity) spans 302-318 (SGGSTMSSGGGNTNNSN). The region spanning 336–375 (DVMVVGEPTLMGGEFGDEDERLITRLENTQFDAANGIDDE) is the LIM interaction domain (LID) domain.

It belongs to the LDB family. Forms homodimers and heterodimers. In terms of tissue distribution, first expressed at stages 15-16 in presumptive limb mesoderm. As limb outgrowth proceeds, expressed in the entire limb bud, concentrating in the distal mesoderm throughout limb development. Both hindlimbs and forelimbs exhibit similar expression patterns.

The protein localises to the nucleus. Binds to the LIM domain of a wide variety of LIM domain-containing transcription factors. This is LIM domain-binding protein 1 from Gallus gallus (Chicken).